A 388-amino-acid polypeptide reads, in one-letter code: Methylthioribose-1-phosphate isomerase (388 aa).

Aspartate 258 serves as the catalytic Proton donor.

The protein belongs to the eIF-2B alpha/beta/delta subunits family. MtnA subfamily.

The protein resides in the cytoplasm. The protein localises to the nucleus. The catalysed reaction is 5-(methylsulfanyl)-alpha-D-ribose 1-phosphate = 5-(methylsulfanyl)-D-ribulose 1-phosphate. It participates in amino-acid biosynthesis; L-methionine biosynthesis via salvage pathway; L-methionine from S-methyl-5-thio-alpha-D-ribose 1-phosphate: step 1/6. Catalyzes the interconversion of methylthioribose-1-phosphate (MTR-1-P) into methylthioribulose-1-phosphate (MTRu-1-P). This Sordaria macrospora (strain ATCC MYA-333 / DSM 997 / K(L3346) / K-hell) protein is Methylthioribose-1-phosphate isomerase.